The chain runs to 462 residues: Glutamate--tRNA ligase (462 aa).

The 'HIGH' region signature appears at 11–21 (PSPTGFIHLGN). The segment covering 120 to 131 (KPRYDGTWRPEP) has biased composition (basic and acidic residues). The segment at 120–140 (KPRYDGTWRPEPGKTLPPIPA) is disordered. Positions 243–247 (KMSKR) match the 'KMSKS' region motif. Lys246 contributes to the ATP binding site.

Belongs to the class-I aminoacyl-tRNA synthetase family. Glutamate--tRNA ligase type 1 subfamily. Monomer.

It localises to the cytoplasm. The catalysed reaction is tRNA(Glu) + L-glutamate + ATP = L-glutamyl-tRNA(Glu) + AMP + diphosphate. Its function is as follows. Catalyzes the attachment of glutamate to tRNA(Glu) in a two-step reaction: glutamate is first activated by ATP to form Glu-AMP and then transferred to the acceptor end of tRNA(Glu). The sequence is that of Glutamate--tRNA ligase from Polaromonas sp. (strain JS666 / ATCC BAA-500).